The chain runs to 428 residues: Histone deacetylase 3 (428 aa).

The tract at residues 3-316 (KTVAYFYDPD…WTYETSLLVE (314 aa)) is histone deacetylase. 1D-myo-inositol 1,4,5,6-tetrakisphosphate contacts are provided by H17, G21, and K25. Residue H135 is part of the active site. D170, H172, and D259 together coordinate Zn(2+). R265 contacts 1D-myo-inositol 1,4,5,6-tetrakisphosphate. Basic and acidic residues-rich tracts occupy residues 388–405 (DRTDEADAEERGPEENYS) and 415–428 (DGDHDNDKESDVEI). The interval 388–428 (DRTDEADAEERGPEENYSRPEAPNEFYDGDHDNDKESDVEI) is disordered. S424 carries the post-translational modification Phosphoserine.

Belongs to the histone deacetylase family. HD type 1 subfamily. As to quaternary structure, interacts with HDAC7 and HDAC9. Interacts with HDAC10, DAXX and DACH1. Found in a complex with NCOR1 and NCOR2. Component of the N-Cor repressor complex, at least composed of NCOR1, NCOR2, HDAC3, TBL1X, TBL1R, CORO2A and GPS2. Interacts with BCOR, MJD2A/JHDM3A, NRIP1, PRDM6 and SRY. Interacts with BTBD14B. Interacts with GLIS2. Interacts (via the DNA-binding domain) with NR2C1; the interaction recruits phosphorylated NR2C1 to PML bodies for sumoylation. Component of the Notch corepressor complex. Interacts with CBFA2T3 and NKAP. Interacts with APEX1; the interaction is not dependent on the acetylated status of APEX1. Interacts with and deacetylates MAPK14. Interacts with ZMYND15. Interacts with SMRT/NCOR2 and BCL6 on DNA enhancer elements. Interacts with INSM1. Interacts with XBP1; the interaction occurs in endothelial cell (EC) under disturbed flow. Interacts (via C-terminus) with CCAR2 (via N-terminus). Interacts with and deacetylates MEF2D. Interacts with BEND3. Interacts with NKAPL. Interacts with DHX36; this interaction occurs in a RNA-dependent manner. Interacts weakly with CRY1; this interaction is enhanced in the presence of FBXL3. Interacts with FBXL3 and BMAL1. Interacts with NCOR1. Interacts with RARA. Interacts with SETD5. Deubiquitinated on 'Lys-63'-linked ubiquitin chains by USP38; leading to a decreased level of histone acetylation. In terms of processing, sumoylated in vitro.

It localises to the nucleus. The protein resides in the chromosome. It is found in the cytoplasm. Its subcellular location is the cytosol. The enzyme catalyses N(6)-acetyl-L-lysyl-[histone] + H2O = L-lysyl-[histone] + acetate. The catalysed reaction is N(6)-acetyl-L-lysyl-[protein] + H2O = L-lysyl-[protein] + acetate. It catalyses the reaction N(6)-(2E)-butenoyl-L-lysyl-[protein] + H2O = (2E)-2-butenoate + L-lysyl-[protein]. It carries out the reaction N(6)-(2-hydroxyisobutanoyl)-L-lysyl-[protein] + H2O = 2-hydroxy-2-methylpropanoate + L-lysyl-[protein]. The enzyme catalyses N(6)-[(S)-lactoyl]-L-lysyl-[protein] + H2O = (S)-lactate + L-lysyl-[protein]. Its activity is regulated as follows. Inositol tetraphosphate (1D-myo-inositol 1,4,5,6-tetrakisphosphate) promotes the histone deacetylase activity by acting as an intermolecular glue between HDAC3 and NCOR2, thereby promoting its association with the N-Cor complex, a prerequisite for the histone deacetylase activity. Histone deacetylase that catalyzes the deacetylation of lysine residues on the N-terminal part of the core histones (H2A, H2B, H3 and H4), and some other non-histone substrates. Histone deacetylation gives a tag for epigenetic repression and plays an important role in transcriptional regulation, cell cycle progression and developmental events. Histone deacetylases act via the formation of large multiprotein complexes, such as N-Cor repressor complex, which activate the histone deacetylase activity. Participates in the BCL6 transcriptional repressor activity by deacetylating the H3 'Lys-27' (H3K27) on enhancer elements, antagonizing EP300 acetyltransferase activity and repressing proximal gene expression. Acts as a molecular chaperone for shuttling phosphorylated NR2C1 to PML bodies for sumoylation. Contributes, together with XBP1 isoform 1, to the activation of NFE2L2-mediated HMOX1 transcription factor gene expression in a PI(3)K/mTORC2/Akt-dependent signaling pathway leading to endothelial cell (EC) survival under disturbed flow/oxidative stress. Regulates both the transcriptional activation and repression phases of the circadian clock in a deacetylase activity-independent manner. During the activation phase, promotes the accumulation of ubiquitinated BMAL1 at the E-boxes and during the repression phase, blocks FBXL3-mediated CRY1/2 ubiquitination and promotes the interaction of CRY1 and BMAL1. The NCOR1-HDAC3 complex regulates the circadian expression of the core clock gene BMAL1 and the genes involved in lipid metabolism in the liver. Also functions as a deacetylase for non-histone targets, such as KAT5, MEF2D, MAPK14, RARA and STAT3. Serves as a corepressor of RARA, mediating its deacetylation and repression, leading to inhibition of RARE DNA element binding. In association with RARA, plays a role in the repression of microRNA-10a and thereby in the inflammatory response. In addition to protein deacetylase activity, also acts as a protein-lysine deacylase by recognizing other acyl groups: catalyzes removal of (2E)-butenoyl (crotonyl), lactoyl (lactyl) and 2-hydroxyisobutanoyl (2-hydroxyisobutyryl) acyl groups from lysine residues, leading to protein decrotonylation, delactylation and de-2-hydroxyisobutyrylation, respectively. Catalyzes decrotonylation of MAPRE1/EB1. Mediates delactylation NBN/NBS1, thereby inhibiting DNA double-strand breaks (DSBs) via homologous recombination (HR). This is Histone deacetylase 3 (HDAC3) from Pongo abelii (Sumatran orangutan).